A 201-amino-acid polypeptide reads, in one-letter code: Peptide deformylase (201 aa).

The Fe cation site is built by cysteine 121 and histidine 163. Glutamate 164 is a catalytic residue. Fe cation is bound at residue histidine 167.

Belongs to the polypeptide deformylase family. It depends on Fe(2+) as a cofactor.

It carries out the reaction N-terminal N-formyl-L-methionyl-[peptide] + H2O = N-terminal L-methionyl-[peptide] + formate. In terms of biological role, removes the formyl group from the N-terminal Met of newly synthesized proteins. Requires at least a dipeptide for an efficient rate of reaction. N-terminal L-methionine is a prerequisite for activity but the enzyme has broad specificity at other positions. The protein is Peptide deformylase of Synechococcus sp. (strain CC9605).